The chain runs to 222 residues: Glutathione S-transferase A2 (222 aa).

N-acetylalanine is present on Ala2. In terms of domain architecture, GST N-terminal spans 3-83 (EKPKLHYSNI…YIASKYNLYG (81 aa)). Lys4 carries the N6-succinyllysine modification. Glutathione-binding positions include Tyr9, Arg45, 54-55 (QV), and 67-68 (QT). The region spanning 85 to 207 (DIKEKALIDM…LQPGSPRKPP (123 aa)) is the GST C-terminal domain. The interval 199–222 (QPGSPRKPPMDEKSLEESRKIFRF) is disordered. Positions 206-222 (PPMDEKSLEESRKIFRF) are enriched in basic and acidic residues.

It belongs to the GST superfamily. Alpha family. In terms of assembly, homodimer or heterodimer of GSTA1 and GSTA2. Liver.

It is found in the cytoplasm. It catalyses the reaction RX + glutathione = an S-substituted glutathione + a halide anion + H(+). Catalyzes the conjugation of glutathione to a large variety of electrophilic compounds. This is Glutathione S-transferase A2 (GSTA2) from Homo sapiens (Human).